The following is a 214-amino-acid chain: Thymidylate kinase (214 aa).

7–14 (GIDGAGKS) contributes to the ATP binding site.

It belongs to the thymidylate kinase family.

It catalyses the reaction dTMP + ATP = dTDP + ADP. In terms of biological role, phosphorylation of dTMP to form dTDP in both de novo and salvage pathways of dTTP synthesis. The protein is Thymidylate kinase of Chlorobaculum tepidum (strain ATCC 49652 / DSM 12025 / NBRC 103806 / TLS) (Chlorobium tepidum).